Reading from the N-terminus, the 2269-residue chain is Anaphase-promoting complex subunit 1 (2269 aa).

Disordered stretches follow at residues 305-334 (PSSNAENDNTNNNNNNNNTNTNISNNQTIN), 379-433 (SSPP…QENS), 609-644 (NNNNNNNNNNNNNNNNNNNNNNNNNNNNNNNKRKPL), 804-845 (KVYP…NNNN), and 1136-1197 (STAS…NSTS). Composition is skewed to low complexity over residues 306–334 (SSNAENDNTNNNNNNNNTNTNISNNQTIN), 379–430 (SSPP…QQQQ), 609–638 (NNNNNNNNNNNNNNNNNNNNNNNNNNNNNN), 809–845 (NNNNNNNNNNNNNNNNNNNNNNNNNNNNNNNNNNNNN), and 1136–1159 (STASSSSNEMNSNSNITSINGQSN). Over residues 1160-1177 (GLPMNSTTNQMNSHQINN) the composition is skewed to polar residues. PC repeat units follow at residues 1440-1472 (AALMGIGLLYCQTSNRRMTEVLLMEIGRKPIND) and 1483-1520 (TAGMALGLVNLGKGANEGSLTDLHVEDRLRSFIGISKE). The segment at 1535 to 1586 (STPSISSNRNNNDLFNNGSNNNSSSNGGGGGGGGNNNGNNSNNGNNGSSQFK) is disordered. Residues 1540-1559 (SSNRNNNDLFNNGSNNNSSS) show a composition bias toward low complexity. Over residues 1560-1570 (NGGGGGGGGNN) the composition is skewed to gly residues. Over residues 1571–1583 (NGNNSNNGNNGSS) the composition is skewed to low complexity. PC repeat units follow at residues 1605-1637 (GAIIALSLIYLKTNNLKISNYLSIPDTTFGLNY), 1722-1756 (GAAFSIGLKYAGSLNENAFSLLMDLIQLFRKRQVY), and 1792-1807 (LVMAGSGNLETLKILR). Over residues 1960 to 1993 (NNNNNNNNNNNNNNNNNNNNNNNNNNNNNNNNNN) the composition is skewed to low complexity. A disordered region spans residues 1960–1997 (NNNNNNNNNNNNNNNNNNNNNNNNNNNNNNNNNNKNIL).

This sequence belongs to the APC1 family. As to quaternary structure, the APC/C is composed of at least 13 subunits that stay tightly associated throughout the cell cycle: anapc1, anapc2, anapc3, anapc4, anapc5, anapc6, anapc7, anapc8, anapc10, anapc11, cdc20, cdc26 and cdh1.

The protein resides in the nucleus. It functions in the pathway protein modification; protein ubiquitination. Its function is as follows. Component of the anaphase promoting complex/cyclosome (APC/C), a cell cycle-regulated E3 ubiquitin-protein ligase complex that controls progression through mitosis and the G1 phase of the cell cycle. The polypeptide is Anaphase-promoting complex subunit 1 (anapc1) (Dictyostelium discoideum (Social amoeba)).